Consider the following 174-residue polypeptide: Gamma-crystallin E (174 aa).

2 Beta/gamma crystallin 'Greek key' domains span residues 2–40 (GKITFYEDRGFQGRHYECSTDHSNLQPYFSRCNSVRVDS) and 41–83 (GCWM…RLIP). The segment at 84–87 (HSSS) is connecting peptide. Beta/gamma crystallin 'Greek key' domains lie at 88-128 (HRIK…HVME) and 129-171 (GYWV…RRIM).

This sequence belongs to the beta/gamma-crystallin family. In terms of tissue distribution, detected in the superior olivary complex of the auditory hindbrain.

Crystallins are the dominant structural components of the vertebrate eye lens. This is Gamma-crystallin E (Cryge) from Mus musculus (Mouse).